A 145-amino-acid chain; its full sequence is Transcriptional regulator SlyA (145 aa).

One can recognise an HTH marR-type domain in the interval 2 to 135 (ELPLGSDLAR…LALLVARLEK (134 aa)). The segment at residues 49 to 72 (QIQLAKAIGIEQPSLVRTLDQLEE) is a DNA-binding region (H-T-H motif).

This sequence belongs to the SlyA family. As to quaternary structure, homodimer.

Transcription regulator that can specifically activate or repress expression of target genes. The polypeptide is Transcriptional regulator SlyA (Pectobacterium atrosepticum (strain SCRI 1043 / ATCC BAA-672) (Erwinia carotovora subsp. atroseptica)).